The chain runs to 216 residues: Cytochrome c biogenesis ATP-binding export protein CcmA (216 aa).

The region spanning 18–216 (LQVEGLAGRR…AHARTLEISA (199 aa)) is the ABC transporter domain. Position 50–57 (50–57 (GHNGSGKT)) interacts with ATP.

It belongs to the ABC transporter superfamily. CcmA exporter (TC 3.A.1.107) family. In terms of assembly, the complex is composed of two ATP-binding proteins (CcmA) and two transmembrane proteins (CcmB).

It is found in the cell inner membrane. The catalysed reaction is heme b(in) + ATP + H2O = heme b(out) + ADP + phosphate + H(+). Its function is as follows. Part of the ABC transporter complex CcmAB involved in the biogenesis of c-type cytochromes; once thought to export heme, this seems not to be the case, but its exact role is uncertain. Responsible for energy coupling to the transport system. This Nitrosococcus oceani (strain ATCC 19707 / BCRC 17464 / JCM 30415 / NCIMB 11848 / C-107) protein is Cytochrome c biogenesis ATP-binding export protein CcmA.